The primary structure comprises 408 residues: MRSSCVLLAALLALAAYYVYIPLPSAVSDPWKLMLLDATFRGAQQVSNLIHSLGLNHHLIALNFIITSFGKQSARSSPKVKVTDTDFDGVEVRVFEGSPKPEEPLRRSVIYIHGGGWALASAKISYYDQLCTTMAEELNAVIVSIEYRLVPQVYFPEQIHDVIRATKYFLQPEVLDKYKVDPGRVGISGDSAGGNLAAALGQQFTYVASLKNKLKLQALVYPVLQALDFNTPSYQQSMNTPILPRHVMVRYWLDYFKGNYDFVEAMIVNNHTSLDVERAAALRARLDWTSLLPSSIKKNYKPIMQTTGNARIVQEIPQLLDAAASPLIAEQEVLEALPKTYILTCEHDVLRDDGIMYAKRLESAGVNVTLDHFEDGFHGCMIFTSWPTNFSVGIRTRNSYIKWLDQNL.

Residues 1–4 (MRSS) lie on the Cytoplasmic side of the membrane. A helical; Signal-anchor for type II membrane protein membrane pass occupies residues 5-25 (CVLLAALLALAAYYVYIPLPS). The Lumenal segment spans residues 26–408 (AVSDPWKLML…SYIKWLDQNL (383 aa)). The Involved in the stabilization of the negatively charged intermediate by the formation of the oxyanion hole motif lies at 113 to 115 (HGG). S191 is an active-site residue. N-linked (GlcNAc...) asparagine glycosylation is present at N270. D348 is an active-site residue. A glycan (N-linked (GlcNAc...) asparagine) is linked at N367. H378 is a catalytic residue. A glycan (N-linked (GlcNAc...) asparagine) is linked at N389.

The protein belongs to the 'GDXG' lipolytic enzyme family. In terms of processing, N-glycosylated. Present in brain, heart, kidney, lung, spinal cord and testis but not liver (at protein level). Expressed in peritoneal macrophages and kidney.

It is found in the cell membrane. It localises to the microsome. The catalysed reaction is a 1-O-alkyl-2-acetyl-sn-glycerol + H2O = a 1-O-alkyl-sn-glycerol + acetate + H(+). It carries out the reaction 1-O-hexadecyl-2-acetyl-sn-glycerol + H2O = 1-O-hexadecyl-sn-glycerol + acetate + H(+). It catalyses the reaction a cholesterol ester + H2O = cholesterol + a fatty acid + H(+). The enzyme catalyses cholesteryl (9Z-octadecenoate) + H2O = cholesterol + (9Z)-octadecenoate + H(+). Inhibited by bulky trifluoromethyl ketones. Hydrolyzes 2-acetyl monoalkylglycerol ether (1-O-alkyl-2-acetyl-sn-glycerol), the penultimate precursor of the pathway for de novo synthesis of platelet-activating factor. May be responsible for the hydrolysis of cholesterol esters (such as cholesteryl (9Z-octadecenoate)) in macrophages. Also involved in organ detoxification by hydrolyzing exogenous organophosphorus compounds. This chain is Neutral cholesterol ester hydrolase 1 (Nceh1), found in Mus musculus (Mouse).